The sequence spans 274 residues: Ribosomal RNA small subunit methyltransferase A (274 aa).

Residues Asn-17, Leu-19, Gly-44, Glu-65, Asp-89, and Asn-111 each contribute to the S-adenosyl-L-methionine site.

Belongs to the class I-like SAM-binding methyltransferase superfamily. rRNA adenine N(6)-methyltransferase family. RsmA subfamily.

It localises to the cytoplasm. The enzyme catalyses adenosine(1518)/adenosine(1519) in 16S rRNA + 4 S-adenosyl-L-methionine = N(6)-dimethyladenosine(1518)/N(6)-dimethyladenosine(1519) in 16S rRNA + 4 S-adenosyl-L-homocysteine + 4 H(+). Functionally, specifically dimethylates two adjacent adenosines (A1518 and A1519) in the loop of a conserved hairpin near the 3'-end of 16S rRNA in the 30S particle. May play a critical role in biogenesis of 30S subunits. The polypeptide is Ribosomal RNA small subunit methyltransferase A (Buchnera aphidicola subsp. Schizaphis graminum (strain Sg)).